The chain runs to 478 residues: Serine/threonine-protein phosphatase 2A activator 1 (478 aa).

The disordered stretch occupies residues 359–478 (DPSAIPPPSR…DITTKAPWAK (120 aa)). Positions 396–419 (APWATASQSTPPPSTGTAAPWATS) are enriched in low complexity.

The protein belongs to the PTPA-type PPIase family.

It is found in the cytoplasm. It localises to the nucleus. It catalyses the reaction [protein]-peptidylproline (omega=180) = [protein]-peptidylproline (omega=0). In terms of biological role, PPIases accelerate the folding of proteins. It catalyzes the cis-trans isomerization of proline imidic peptide bonds in oligopeptides. Acts as a regulatory subunit for PP2A-like phosphatases modulating their activity or substrate specificity, probably by inducing a conformational change in the catalytic subunit, a direct target of the PPIase. Can reactivate inactive phosphatase PP2A-phosphatase methylesterase complexes (PP2Ai) in presence of ATP and Mg(2+) by dissociating the inactive form from the complex. This is Serine/threonine-protein phosphatase 2A activator 1 (rrd1) from Aspergillus oryzae (strain ATCC 42149 / RIB 40) (Yellow koji mold).